The sequence spans 333 residues: L-lactate dehydrogenase B chain (333 aa).

NAD(+)-binding positions include 29–57 (GQVGMACAVSILMRELADELALVDVIEDK) and arginine 99. The substrate site is built by arginine 106, asparagine 138, and arginine 169. NAD(+) is bound at residue asparagine 138. The Proton acceptor role is filled by histidine 193. Residue threonine 248 participates in substrate binding.

It belongs to the LDH/MDH superfamily. LDH family. Homotetramer.

Its subcellular location is the cytoplasm. The catalysed reaction is (S)-lactate + NAD(+) = pyruvate + NADH + H(+). Its pathway is fermentation; pyruvate fermentation to lactate; (S)-lactate from pyruvate: step 1/1. Interconverts simultaneously and stereospecifically pyruvate and lactate with concomitant interconversion of NADH and NAD(+). In Anguilla rostrata (American eel), this protein is L-lactate dehydrogenase B chain (ldhb).